Reading from the N-terminus, the 296-residue chain is Probable DNA-directed RNA polymerase III subunit RPC6 (296 aa).

Belongs to the eukaryotic RPC34/RPC39 RNA polymerase subunit family.

It localises to the nucleus. In terms of biological role, DNA-dependent RNA polymerase catalyzes the transcription of DNA into RNA using the four ribonucleoside triphosphates as substrates. Specific peripheric component of RNA polymerase III which synthesizes small RNAs, such as 5S rRNA and tRNAs. The sequence is that of Probable DNA-directed RNA polymerase III subunit RPC6 from Caenorhabditis elegans.